Here is a 246-residue protein sequence, read N- to C-terminus: MWVGIISLFPEMFRSVTDFGVTGQAVKKGLLSIETWNPRDFTHDKHRTVDDRPYGGGPGMLMMVQPLRDAIQTAKQAAPGKTKVIYLSPQGRKLDQQGVEELATNENLLLICGRYEGVDERIIQSEVDEEWSIGDFVMTGGELPAMTLIDSVSRFVPGVLGDFASAEEDSFANGLLDCPHYTRPEVLDDKDVPSVLKSGNHKDIRRWRLKQSLGRTWLRRPELLENLALTDEQEQLLAEFIKEQRS.

Residues Gly113 and 133 to 138 (IGDFVM) each bind S-adenosyl-L-methionine.

The protein belongs to the RNA methyltransferase TrmD family. As to quaternary structure, homodimer.

It is found in the cytoplasm. The catalysed reaction is guanosine(37) in tRNA + S-adenosyl-L-methionine = N(1)-methylguanosine(37) in tRNA + S-adenosyl-L-homocysteine + H(+). Specifically methylates guanosine-37 in various tRNAs. This is tRNA (guanine-N(1)-)-methyltransferase from Vibrio atlanticus (strain LGP32) (Vibrio splendidus (strain Mel32)).